Consider the following 343-residue polypeptide: Holliday junction branch migration complex subunit RuvB (343 aa).

The large ATPase domain (RuvB-L) stretch occupies residues 4–193 (TDNLTAAQPQ…FGIVSRLEFY (190 aa)). ATP-binding positions include Leu32, Arg33, Gly74, Lys77, Thr78, Thr79, 140–142 (EDY), Arg183, Tyr193, and Arg230. Residue Thr78 coordinates Mg(2+). The small ATPAse domain (RuvB-S) stretch occupies residues 194-264 (ENRDLTTIVS…IADAALSMLD (71 aa)). The tract at residues 267-343 (AQGLDVMDRK…YLHFGLPVEK (77 aa)) is head domain (RuvB-H). 2 residues coordinate DNA: Arg322 and Arg327.

Belongs to the RuvB family. Homohexamer. Forms an RuvA(8)-RuvB(12)-Holliday junction (HJ) complex. HJ DNA is sandwiched between 2 RuvA tetramers; dsDNA enters through RuvA and exits via RuvB. An RuvB hexamer assembles on each DNA strand where it exits the tetramer. Each RuvB hexamer is contacted by two RuvA subunits (via domain III) on 2 adjacent RuvB subunits; this complex drives branch migration. In the full resolvosome a probable DNA-RuvA(4)-RuvB(12)-RuvC(2) complex forms which resolves the HJ.

It is found in the cytoplasm. It catalyses the reaction ATP + H2O = ADP + phosphate + H(+). Functionally, the RuvA-RuvB-RuvC complex processes Holliday junction (HJ) DNA during genetic recombination and DNA repair, while the RuvA-RuvB complex plays an important role in the rescue of blocked DNA replication forks via replication fork reversal (RFR). RuvA specifically binds to HJ cruciform DNA, conferring on it an open structure. The RuvB hexamer acts as an ATP-dependent pump, pulling dsDNA into and through the RuvAB complex. RuvB forms 2 homohexamers on either side of HJ DNA bound by 1 or 2 RuvA tetramers; 4 subunits per hexamer contact DNA at a time. Coordinated motions by a converter formed by DNA-disengaged RuvB subunits stimulates ATP hydrolysis and nucleotide exchange. Immobilization of the converter enables RuvB to convert the ATP-contained energy into a lever motion, pulling 2 nucleotides of DNA out of the RuvA tetramer per ATP hydrolyzed, thus driving DNA branch migration. The RuvB motors rotate together with the DNA substrate, which together with the progressing nucleotide cycle form the mechanistic basis for DNA recombination by continuous HJ branch migration. Branch migration allows RuvC to scan DNA until it finds its consensus sequence, where it cleaves and resolves cruciform DNA. In Neisseria meningitidis serogroup C (strain 053442), this protein is Holliday junction branch migration complex subunit RuvB.